Here is a 444-residue protein sequence, read N- to C-terminus: Homogentisate 1,2-dioxygenase (444 aa).

Residue His298 is the Proton acceptor of the active site. Positions 341 and 347 each coordinate Fe cation. Tyr356 and His377 together coordinate homogentisate. Residue His377 participates in Fe cation binding.

The protein belongs to the homogentisate dioxygenase family. As to quaternary structure, hexamer; dimer of trimers. It depends on Fe cation as a cofactor.

The enzyme catalyses homogentisate + O2 = 4-maleylacetoacetate + H(+). It participates in amino-acid degradation; L-phenylalanine degradation; acetoacetate and fumarate from L-phenylalanine: step 4/6. Its function is as follows. Involved in the catabolism of homogentisate (2,5-dihydroxyphenylacetate or 2,5-OH-PhAc), a central intermediate in the degradation of phenylalanine and tyrosine. Catalyzes the oxidative ring cleavage of the aromatic ring of homogentisate to yield maleylacetoacetate. The chain is Homogentisate 1,2-dioxygenase from Burkholderia orbicola (strain MC0-3).